The chain runs to 750 residues: NAD(P)H-quinone oxidoreductase subunit 5, chloroplastic (750 aa).

16 helical membrane-spanning segments follow: residues 9–29 (WIIP…LLLF), 40–60 (WAFT…NLSI), 89–109 (IDPL…MVLI), 125–145 (FAYM…SNLI), 147–167 (IYIF…FWFT), 185–205 (GDFG…SFEF), 230–250 (AALL…HIWL), 258–278 (TPIS…FLVA), 283–303 (LFIV…ITVL), 327–347 (LGYM…FHLI), 354–374 (ALLF…VGYS), 396–416 (TSFL…CFWS), 425–445 (WLYS…TAFY), 548–568 (LFPL…GIPF), 607–627 (IFSV…YKPI), and 724–744 (LFFY…FYLF).

Belongs to the complex I subunit 5 family. In terms of assembly, NDH is composed of at least 16 different subunits, 5 of which are encoded in the nucleus.

It localises to the plastid. The protein resides in the chloroplast thylakoid membrane. The enzyme catalyses a plastoquinone + NADH + (n+1) H(+)(in) = a plastoquinol + NAD(+) + n H(+)(out). It carries out the reaction a plastoquinone + NADPH + (n+1) H(+)(in) = a plastoquinol + NADP(+) + n H(+)(out). Its function is as follows. NDH shuttles electrons from NAD(P)H:plastoquinone, via FMN and iron-sulfur (Fe-S) centers, to quinones in the photosynthetic chain and possibly in a chloroplast respiratory chain. The immediate electron acceptor for the enzyme in this species is believed to be plastoquinone. Couples the redox reaction to proton translocation, and thus conserves the redox energy in a proton gradient. The chain is NAD(P)H-quinone oxidoreductase subunit 5, chloroplastic (ndhF) from Tecoma stans (Yellow bells).